Reading from the N-terminus, the 371-residue chain is Chaperone protein DnaJ (371 aa).

In terms of domain architecture, J spans 5 to 70 (DYYEVLGVNR…QKRAAYDQYG (66 aa)). A disordered region spans residues 31 to 52 (KYHPDRNPDNPKAEESFKEAKE). Over residues 32 to 52 (YHPDRNPDNPKAEESFKEAKE) the composition is skewed to basic and acidic residues. The CR-type zinc-finger motif lies at 132–210 (RTETKIRIPV…CQGAGRVKKH (79 aa)). Cysteine 145, cysteine 148, cysteine 162, cysteine 165, cysteine 184, cysteine 187, cysteine 198, and cysteine 201 together coordinate Zn(2+). CXXCXGXG motif repeat units lie at residues 145 to 152 (CETCHGSG), 162 to 169 (CTTCGGHG), 184 to 191 (CPKCHGSG), and 198 to 205 (CPSCQGAG).

Belongs to the DnaJ family. In terms of assembly, homodimer. It depends on Zn(2+) as a cofactor.

The protein localises to the cytoplasm. Functionally, participates actively in the response to hyperosmotic and heat shock by preventing the aggregation of stress-denatured proteins and by disaggregating proteins, also in an autonomous, DnaK-independent fashion. Unfolded proteins bind initially to DnaJ; upon interaction with the DnaJ-bound protein, DnaK hydrolyzes its bound ATP, resulting in the formation of a stable complex. GrpE releases ADP from DnaK; ATP binding to DnaK triggers the release of the substrate protein, thus completing the reaction cycle. Several rounds of ATP-dependent interactions between DnaJ, DnaK and GrpE are required for fully efficient folding. Also involved, together with DnaK and GrpE, in the DNA replication of plasmids through activation of initiation proteins. The chain is Chaperone protein DnaJ from Methylovorus sp. (strain SS1 / DSM 11726).